Consider the following 287-residue polypeptide: Bifunctional protein FolD (287 aa).

Residues 165-167 (GRG), Thr-190, and Ile-231 each bind NADP(+).

Belongs to the tetrahydrofolate dehydrogenase/cyclohydrolase family. As to quaternary structure, homodimer.

It catalyses the reaction (6R)-5,10-methylene-5,6,7,8-tetrahydrofolate + NADP(+) = (6R)-5,10-methenyltetrahydrofolate + NADPH. It carries out the reaction (6R)-5,10-methenyltetrahydrofolate + H2O = (6R)-10-formyltetrahydrofolate + H(+). It functions in the pathway one-carbon metabolism; tetrahydrofolate interconversion. Catalyzes the oxidation of 5,10-methylenetetrahydrofolate to 5,10-methenyltetrahydrofolate and then the hydrolysis of 5,10-methenyltetrahydrofolate to 10-formyltetrahydrofolate. The sequence is that of Bifunctional protein FolD from Heliobacterium modesticaldum (strain ATCC 51547 / Ice1).